Here is a 147-residue protein sequence, read N- to C-terminus: Microtubule-associated protein 1 light chain 3 gamma (147 aa).

Residues S93 and S96 each carry the phosphoserine; by TBK1 modification. G126 carries Phosphatidylethanolamine amidated glycine; alternate lipidation. G126 is lipidated: Phosphatidylserine amidated glycine; alternate. Positions 127–147 are cleaved as a propeptide — removed in mature form; that stretch reads CLESAAPRDGSSLEDRPCNPL.

Belongs to the ATG8 family. 3 different light chains, LC1 (a cleavage product of MAP1B), LC2 (a cleavage product of MAP1A) and LC3 (produced by one of the MAP1LC3 genes), can associate with the MAP1A or MAP1B heavy chains. Interacts with TP53INP1 and TP53INP2. Interacts with CALCOCO2. Interacts with TECPR2. Interacts with TBC1D5. Found in a complex with UBQLN1 and UBQLN2. Interacts with UBQLN4 (via STI1 1 and 2 domains). Interacts with UBQLN1 in the presence of UBQLN4. Interacts with TRIM5. Interacts with ATG13. Interacts with MEFV and TRIM21. Interacts with WDR81; recruits MAP1LC3C to ubiquitinated protein aggregates in the aggrephagy process. Interacts with MOAP1 (via LIR motif). Interacts with reticulophagy regulators RETREG1, RETREG2 and RETREG3. Interacts with TAX1BP1. Interacts with IRGM. Interacts with SPART. The precursor molecule is cleaved by ATG4 (ATG4A, ATG4B, ATG4C or ATG4D) to expose the glycine at the C-terminus and form the cytosolic form, LC3-I. The processed form is then activated by APG7L/ATG7, transferred to ATG3 and conjugated to phosphatidylethanolamine (PE) phospholipid to form the membrane-bound form, LC3-II. During non-canonical autophagy, the processed form is conjugated to phosphatidylserine (PS) phospholipid. ATG4 proteins also mediate the delipidation of PE-conjugated forms. In addition, ATG4B and ATG4D mediate delipidation of ATG8 proteins conjugated to PS during non-canonical autophagy. In terms of processing, (Microbial infection) The Legionella effector RavZ is a deconjugating enzyme that hydrolyzes the amide bond between the C-terminal glycine residue and an adjacent aromatic residue in ATG8 proteins conjugated to phosphatidylethanolamine (PE), producing an ATG8 protein that is resistant to reconjugation by the host machinery due to the cleavage of the reactive C-terminal glycine. RavZ is also able to mediate delipidation of ATG8 proteins conjugated to phosphatidylserine (PS). Post-translationally, phosphorylation at Ser-96 and Ser-98 by TBK1 prevents interaction with ATG4 (ATG4A, ATG4B, ATG4C or ATG4D). Phosphorylation by TBK1 on autophagosomes prevents their delipidation by ATG4 and premature removal from nascent autophagosomes. As to expression, most abundant in placenta, lung and ovary.

Its subcellular location is the cytoplasmic vesicle. It is found in the autophagosome membrane. It localises to the endomembrane system. The protein resides in the cytoplasm. The protein localises to the cytoskeleton. Ubiquitin-like modifier that plays a crucial role in antibacterial autophagy (xenophagy) through the selective binding of CALCOCO2. Recruits all ATG8 family members to infecting bacteria such as S.typhimurium. May also play a role in aggrephagy, the macroautophagic degradation of ubiquitinated and aggregated proteins. This chain is Microtubule-associated protein 1 light chain 3 gamma (MAP1LC3C), found in Homo sapiens (Human).